Reading from the N-terminus, the 67-residue chain is uncharacterized protein (67 aa).

Transmembrane regions (helical) follow at residues 6-26 (GQLW…CVLM) and 38-58 (NNII…IIII).

It is found in the membrane. This is an uncharacterized protein from Dictyostelium discoideum (Social amoeba).